The following is a 298-amino-acid chain: Glutamyl-Q tRNA(Asp) synthetase (298 aa).

Residues Arg9–Ser13 and Glu45 each bind L-glutamate. Residues Pro12–Ser22 carry the 'HIGH' region motif. Zn(2+) is bound by residues Cys101, Cys103, Tyr115, and Cys119. L-glutamate-binding residues include Tyr172 and Arg190. Residues Lys228–Gln232 carry the 'KMSKS' region motif. Lys231 serves as a coordination point for ATP.

The protein belongs to the class-I aminoacyl-tRNA synthetase family. GluQ subfamily. Requires Zn(2+) as cofactor.

Functionally, catalyzes the tRNA-independent activation of glutamate in presence of ATP and the subsequent transfer of glutamate onto a tRNA(Asp). Glutamate is transferred on the 2-amino-5-(4,5-dihydroxy-2-cyclopenten-1-yl) moiety of the queuosine in the wobble position of the QUC anticodon. The polypeptide is Glutamyl-Q tRNA(Asp) synthetase (Salmonella choleraesuis (strain SC-B67)).